The sequence spans 313 residues: Ornithine carbamoyltransferase (313 aa).

Carbamoyl phosphate contacts are provided by residues 57 to 60, Gln84, Arg108, and 135 to 138; these read STRT and HPCQ. L-ornithine-binding positions include Asn166, Asp230, and 234 to 235; that span reads SM. Residues 270–271 and Arg298 contribute to the carbamoyl phosphate site; that span reads CL.

Belongs to the aspartate/ornithine carbamoyltransferase superfamily. OTCase family. Homohexamer.

It localises to the cytoplasm. It catalyses the reaction carbamoyl phosphate + L-ornithine = L-citrulline + phosphate + H(+). Its pathway is amino-acid biosynthesis; L-arginine biosynthesis; L-arginine from L-ornithine and carbamoyl phosphate: step 1/3. In terms of biological role, reversibly catalyzes the transfer of the carbamoyl group from carbamoyl phosphate (CP) to the N(epsilon) atom of ornithine (ORN) to produce L-citrulline. The sequence is that of Ornithine carbamoyltransferase from Gloeobacter violaceus (strain ATCC 29082 / PCC 7421).